A 204-amino-acid chain; its full sequence is Large ribosomal subunit protein eL15 (204 aa).

This sequence belongs to the eukaryotic ribosomal protein eL15 family.

This chain is Large ribosomal subunit protein eL15 (RpL15), found in Anopheles gambiae (African malaria mosquito).